Reading from the N-terminus, the 315-residue chain is Protein MFI (315 aa).

Can homodimerize. Interacts with MFF; the interaction inhibits MFF interaction with DNM1L. In terms of tissue distribution, enriched in the pancreatic beta cell and the testis and is expressed at low levels in other tissues tested.

The protein localises to the cytoplasm. It is found in the cytosol. Its subcellular location is the mitochondrion outer membrane. In terms of biological role, acts as an inhibitor of mitochondrial fission. Interacts with MFF and prevents DNM1L recruitment to mitochondria, promoting a more fused mitochondrial network. This Mus musculus (Mouse) protein is Protein MFI.